Reading from the N-terminus, the 391-residue chain is ATP phosphoribosyltransferase regulatory subunit (391 aa).

Belongs to the class-II aminoacyl-tRNA synthetase family. HisZ subfamily. Heteromultimer composed of HisG and HisZ subunits.

Its subcellular location is the cytoplasm. It participates in amino-acid biosynthesis; L-histidine biosynthesis; L-histidine from 5-phospho-alpha-D-ribose 1-diphosphate: step 1/9. Required for the first step of histidine biosynthesis. May allow the feedback regulation of ATP phosphoribosyltransferase activity by histidine. This chain is ATP phosphoribosyltransferase regulatory subunit, found in Nitrosomonas europaea (strain ATCC 19718 / CIP 103999 / KCTC 2705 / NBRC 14298).